The primary structure comprises 450 residues: Phosphoglucosamine mutase (450 aa).

S101 acts as the Phosphoserine intermediate in catalysis. The Mg(2+) site is built by S101, D240, D242, and D244. A Phosphoserine modification is found at S101.

It belongs to the phosphohexose mutase family. Mg(2+) serves as cofactor. Post-translationally, activated by phosphorylation.

The enzyme catalyses alpha-D-glucosamine 1-phosphate = D-glucosamine 6-phosphate. Its function is as follows. Catalyzes the conversion of glucosamine-6-phosphate to glucosamine-1-phosphate. This chain is Phosphoglucosamine mutase, found in Streptococcus equi subsp. zooepidemicus (strain H70).